A 657-amino-acid polypeptide reads, in one-letter code: THO complex subunit 1 (657 aa).

M1 is subject to N-acetylmethionine. S2 is modified (phosphoserine). T4 bears the Phosphothreonine mark. K31 is covalently cross-linked (Glycyl lysine isopeptide (Lys-Gly) (interchain with G-Cter in SUMO2)). K133 is subject to N6-acetyllysine. Residues 133-167 (KNYLLRMCNDLLRRLSKSQNTVFCGRIQLFLARLF) form a dock domain; interaction with THOC2 region. Residues 194-221 (QESTLGQKHTEDREEGMDVEEGEMGDDE) form a disordered region. Positions 206-221 (REEGMDVEEGEMGDDE) are enriched in acidic residues. The interval 227–397 (SIPIDYNLYR…WNSWKNEGCP (171 aa)) is dock domain; interaction with THOC2. K300 is modified (N6-acetyllysine). A Glycyl lysine isopeptide (Lys-Gly) (interchain with G-Cter in SUMO2) cross-link involves residue K408. The short motif at 414 to 430 (RKRAAPEDFLGKGPNKK) is the Nuclear localization signal element. Residues 533-569 (LPPPSEEIKTGEDEDEEDNDALLKENESPDVRRDKPI) are disordered. Phosphoserine is present on S537. T542 carries the phosphothreonine modification. Positions 553-569 (ALLKENESPDVRRDKPI) are enriched in basic and acidic residues. S560 is subject to Phosphoserine. The Death domain occupies 570–653 (TGEQIESFAN…DLAESLTNDT (84 aa)). K580 is covalently cross-linked (Glycyl lysine isopeptide (Lys-Gly) (interchain with G-Cter in SUMO2)). Residue K595 forms a Glycyl lysine isopeptide (Lys-Gly) (interchain with G-Cter in SUMO1); alternate linkage. K595 is covalently cross-linked (Glycyl lysine isopeptide (Lys-Gly) (interchain with G-Cter in SUMO2); alternate).

Belongs to the THOC1 family. Component of the THO subcomplex, which is composed of THOC1, THOC2, THOC3, THOC5, THOC6 and THOC7. The THO subcomplex interacts with DDX39B to form the THO-DDX39B complex which multimerizes into a 28-subunit tetrameric assembly. Component of the transcription/export (TREX) complex at least composed of ALYREF/THOC4, DDX39B, SARNP/CIP29, CHTOP and the THO subcomplex; in the complex interacts with THOC2, THOC5 and THOC7. TREX seems to have a dynamic structure involving ATP-dependent remodeling. Binds to the hypophosphorylated form of RB1. Interacts with RNA polymerase II. Interacts with LUZP4. Interacts with THOC5. Expression is altered specifically during apoptosis and is accompanied by the appearance of novel forms with smaller apparent molecular mass. In terms of processing, polyubiquitinated, leading to proteasomal degradation; probably involves NEDD4. As to expression, in the inner ear, specifically expressed in inner and outer hair cells (at protein level).

The protein resides in the nucleus. It localises to the nucleoplasm. The protein localises to the nucleus matrix. It is found in the cytoplasm. Its subcellular location is the cytosol. In terms of biological role, component of the THO subcomplex of the TREX complex which is thought to couple mRNA transcription, processing and nuclear export, and which specifically associates with spliced mRNA and not with unspliced pre-mRNA. Required for efficient export of polyadenylated RNA. The THOC1-THOC2-THOC3 core complex alone is sufficient to bind export factor NXF1-NXT1 and promote ATPase activity of DDX39B. TREX is recruited to spliced mRNAs by a transcription-independent mechanism, binds to mRNA upstream of the exon-junction complex (EJC) and is recruited in a splicing- and cap-dependent manner to a region near the 5' end of the mRNA where it functions in mRNA export to the cytoplasm via the TAP/NXF1 pathway. Regulates transcriptional elongation of a subset of genes. Involved in genome stability by preventing co-transcriptional R-loop formation. May play a role in hair cell formation, hence may be involved in hearing. Participates in an apoptotic pathway which is characterized by activation of caspase-6, increases in the expression of BAK1 and BCL2L1 and activation of NF-kappa-B. This pathway does not require p53/TP53, nor does the presence of p53/TP53 affect the efficiency of cell killing. Activates a G2/M cell cycle checkpoint prior to the onset of apoptosis. Apoptosis is inhibited by association with RB1. Essential for early embryonic development. Required for normal gene expression during postnatal testis development. The sequence is that of THO complex subunit 1 (Thoc1) from Mus musculus (Mouse).